A 542-amino-acid polypeptide reads, in one-letter code: CTP synthase (542 aa).

The tract at residues 1–265 (MARYVFITGG…DSEVLSAFGM (265 aa)) is amidoligase domain. Serine 13 contacts CTP. Serine 13 contacts UTP. 14–19 (SLGKGI) provides a ligand contact to ATP. Tyrosine 54 serves as a coordination point for L-glutamine. Aspartate 71 contributes to the ATP binding site. 2 residues coordinate Mg(2+): aspartate 71 and glutamate 139. CTP-binding positions include 146–148 (DIE), 186–191 (KTKPTQ), and lysine 222. UTP-binding positions include 186–191 (KTKPTQ) and lysine 222. Residues 291 to 541 (TIAVVGKYTG…IEATVEQSRL (251 aa)) enclose the Glutamine amidotransferase type-1 domain. Alanine 353 provides a ligand contact to L-glutamine. The active-site Nucleophile; for glutamine hydrolysis is cysteine 380. Residues 381–384 (FGMQ), glutamate 404, and arginine 469 contribute to the L-glutamine site. Catalysis depends on residues histidine 514 and glutamate 516.

It belongs to the CTP synthase family. In terms of assembly, homotetramer.

It catalyses the reaction UTP + L-glutamine + ATP + H2O = CTP + L-glutamate + ADP + phosphate + 2 H(+). The enzyme catalyses L-glutamine + H2O = L-glutamate + NH4(+). The catalysed reaction is UTP + NH4(+) + ATP = CTP + ADP + phosphate + 2 H(+). It participates in pyrimidine metabolism; CTP biosynthesis via de novo pathway; CTP from UDP: step 2/2. Its activity is regulated as follows. Allosterically activated by GTP, when glutamine is the substrate; GTP has no effect on the reaction when ammonia is the substrate. The allosteric effector GTP functions by stabilizing the protein conformation that binds the tetrahedral intermediate(s) formed during glutamine hydrolysis. Inhibited by the product CTP, via allosteric rather than competitive inhibition. Its function is as follows. Catalyzes the ATP-dependent amination of UTP to CTP with either L-glutamine or ammonia as the source of nitrogen. Regulates intracellular CTP levels through interactions with the four ribonucleotide triphosphates. The polypeptide is CTP synthase (Bartonella henselae (strain ATCC 49882 / DSM 28221 / CCUG 30454 / Houston 1) (Rochalimaea henselae)).